Here is a 315-residue protein sequence, read N- to C-terminus: 4-hydroxy-3-methylbut-2-enyl diphosphate reductase (315 aa).

Position 12 (cysteine 12) interacts with [4Fe-4S] cluster. Positions 41 and 74 each coordinate (2E)-4-hydroxy-3-methylbut-2-enyl diphosphate. Dimethylallyl diphosphate is bound by residues histidine 41 and histidine 74. Residues histidine 41 and histidine 74 each coordinate isopentenyl diphosphate. Cysteine 96 lines the [4Fe-4S] cluster pocket. Residue histidine 124 participates in (2E)-4-hydroxy-3-methylbut-2-enyl diphosphate binding. Histidine 124 is a binding site for dimethylallyl diphosphate. Histidine 124 contacts isopentenyl diphosphate. Catalysis depends on glutamate 126, which acts as the Proton donor. Residue threonine 168 coordinates (2E)-4-hydroxy-3-methylbut-2-enyl diphosphate. Cysteine 198 serves as a coordination point for [4Fe-4S] cluster. The (2E)-4-hydroxy-3-methylbut-2-enyl diphosphate site is built by serine 226, serine 227, asparagine 228, and serine 270. Dimethylallyl diphosphate is bound by residues serine 226, serine 227, asparagine 228, and serine 270. The isopentenyl diphosphate site is built by serine 226, serine 227, asparagine 228, and serine 270.

This sequence belongs to the IspH family. [4Fe-4S] cluster serves as cofactor.

The catalysed reaction is isopentenyl diphosphate + 2 oxidized [2Fe-2S]-[ferredoxin] + H2O = (2E)-4-hydroxy-3-methylbut-2-enyl diphosphate + 2 reduced [2Fe-2S]-[ferredoxin] + 2 H(+). It catalyses the reaction dimethylallyl diphosphate + 2 oxidized [2Fe-2S]-[ferredoxin] + H2O = (2E)-4-hydroxy-3-methylbut-2-enyl diphosphate + 2 reduced [2Fe-2S]-[ferredoxin] + 2 H(+). It functions in the pathway isoprenoid biosynthesis; dimethylallyl diphosphate biosynthesis; dimethylallyl diphosphate from (2E)-4-hydroxy-3-methylbutenyl diphosphate: step 1/1. It participates in isoprenoid biosynthesis; isopentenyl diphosphate biosynthesis via DXP pathway; isopentenyl diphosphate from 1-deoxy-D-xylulose 5-phosphate: step 6/6. Functionally, catalyzes the conversion of 1-hydroxy-2-methyl-2-(E)-butenyl 4-diphosphate (HMBPP) into a mixture of isopentenyl diphosphate (IPP) and dimethylallyl diphosphate (DMAPP). Acts in the terminal step of the DOXP/MEP pathway for isoprenoid precursor biosynthesis. The chain is 4-hydroxy-3-methylbut-2-enyl diphosphate reductase from Pseudomonas syringae pv. syringae (strain B728a).